We begin with the raw amino-acid sequence, 436 residues long: GTPase Der (436 aa).

EngA-type G domains are found at residues 4-167 (PTVA…PTEA) and 175-351 (IKFS…QSQN). GTP contacts are provided by residues 10–17 (GRPNVGKS), 57–61 (DTGGI), 119–122 (NKVD), 181–188 (GRPNVGKS), 229–233 (DTAGM), and 294–297 (NKWD). The KH-like domain maps to 352-436 (TRIPSAVLND…PIRLIARKRK (85 aa)).

This sequence belongs to the TRAFAC class TrmE-Era-EngA-EngB-Septin-like GTPase superfamily. EngA (Der) GTPase family. As to quaternary structure, associates with the 50S ribosomal subunit.

Functionally, GTPase that plays an essential role in the late steps of ribosome biogenesis. The chain is GTPase Der from Streptococcus mutans serotype c (strain ATCC 700610 / UA159).